A 1210-amino-acid chain; its full sequence is Homeodomain-interacting protein kinase 1 (1210 aa).

A Glycyl lysine isopeptide (Lys-Gly) (interchain with G-Cter in SUMO); alternate cross-link involves residue Lys25. Lys25 is covalently cross-linked (Glycyl lysine isopeptide (Lys-Gly) (interchain with G-Cter in SUMO2); alternate). Residues Lys120 and Lys124 each participate in a glycyl lysine isopeptide (Lys-Gly) (interchain with G-Cter in SUMO2) cross-link. The Protein kinase domain maps to 190–518 (YEVLEFLGRG…PLKTLNHQFV (329 aa)). Residues 196-204 (LGRGTFGQV) and Lys219 contribute to the ATP site. Asp315 (proton acceptor) is an active-site residue. The segment at 835–856 (QQQSSSLPSKKNKQSAPVSSKS) is disordered. The short motif at 844–847 (KKNK) is the Nuclear localization signal 1 (NLS1) element. The residue at position 872 (Ser872) is a Phosphoserine. Residues 885–1093 (PVQDQHQPII…FQHGSPLHST (209 aa)) are interaction with TP53. Residues 891 to 998 (QPIIIPDTPS…PLKTQLGDCT (108 aa)) are required for localization to nuclear speckles. An SUMO interaction motifs (SIM); required for nuclear localization and kinase activity region spans residues 902–926 (PVSVITIRSDTDEEEDNKYKPNSSS). The segment at 938–981 (TVNDSPDSDSSLSSPHPTDTLSALRGNSGTLLEGPGRPAADGIG) is disordered. Residues 941–959 (DSPDSDSSLSSPHPTDTLS) are compositionally biased toward low complexity. Residue Lys991 forms a Glycyl lysine isopeptide (Lys-Gly) (interchain with G-Cter in SUMO2) linkage. 2 disordered regions span residues 1046–1069 (LSQN…APRR) and 1084–1104 (FQHG…APAH). 2 stretches are compositionally biased toward low complexity: residues 1047–1063 (SQNQ…ERSS) and 1095–1104 (HPHLAPAPAH). Phosphoserine is present on Ser1200. Lys1203 is covalently cross-linked (Glycyl lysine isopeptide (Lys-Gly) (interchain with G-Cter in SUMO)).

This sequence belongs to the protein kinase superfamily. CMGC Ser/Thr protein kinase family. HIPK subfamily. In terms of assembly, interacts with Nkx1-2, Nkx2-5, MYB, PARK7, DAXX and p53/TP53. Part of a cytoplasmic complex made of HIPK1, DAB2IP and MAP3K5 in response to TNF. This complex formation promotes MAP3K5-JNK activation and subsequent apoptosis. Phosphorylated and activated by JNK1. Autophosphorylated. Post-translationally, sumoylated. When conjugated it is directed to nuclear speckles. SENP1-mediated desumoylation is mediated by TNF in response to stress stimuli, triggering transient translocation from nucleus to cytoplasm. Ubiquitously expressed, with high levels in reproductive tissues. Expressed in the epithelial layer of mammary gland, uterus and epididymis, in the corpus luteum, and in post-meiotic round spermatids.

The protein resides in the nucleus. It localises to the cytoplasm. It is found in the nucleus speckle. It carries out the reaction L-seryl-[protein] + ATP = O-phospho-L-seryl-[protein] + ADP + H(+). The enzyme catalyses L-threonyl-[protein] + ATP = O-phospho-L-threonyl-[protein] + ADP + H(+). Its function is as follows. Serine/threonine-protein kinase involved in transcription regulation and TNF-mediated cellular apoptosis. Plays a role as a corepressor for homeodomain transcription factors. Phosphorylates DAXX and MYB. Phosphorylates DAXX in response to stress, and mediates its translocation from the nucleus to the cytoplasm. Inactivates MYB transcription factor activity by phosphorylation. Prevents MAP3K5-JNK activation in the absence of TNF. TNF triggers its translocation to the cytoplasm in response to stress stimuli, thus activating nuclear MAP3K5-JNK by derepression and promoting apoptosis. May be involved in anti-oxidative stress responses. Involved in the regulation of eye size, lens formation and retinal lamination during late embryogenesis. Promotes angiogenesis and to be involved in erythroid differentiation. May be involved in malignant squamous cell tumor formation. Phosphorylates PAGE4 at 'Thr-51' which is critical for the ability of PAGE4 to potentiate the transcriptional activator activity of JUN. This chain is Homeodomain-interacting protein kinase 1 (Hipk1), found in Mus musculus (Mouse).